We begin with the raw amino-acid sequence, 271 residues long: Neurexophilin-1 (271 aa).

The N-terminal stretch at 1–21 (MQAACWYVLLLLQPTVYLVTC) is a signal peptide. The interval 22-97 (ANLTNGGKSE…WDWLRNSTDL (76 aa)) is II. N-linked (GlcNAc...) asparagine glycosylation is found at Asn-23, Asn-68, Asn-93, Asn-146, Asn-156, and Asn-162. The tract at residues 98–176 (QEPRPRAKRR…LVPPTKIVEF (79 aa)) is III. The IV (linker domain) stretch occupies residues 177-185 (DLAQQTVID). Residues 186-271 (AKDSKSFNCR…HSDTPYFPSG (86 aa)) form a v (Cys-rich) region.

It belongs to the neurexophilin family. Post-translationally, may be proteolytically processed at the boundary between the N-terminal non-conserved and the central conserved domain in neuron-like cells. As to expression, brain, only in a scattered subpopulation of neurons that probably represent inhibitory interneurons.

It is found in the secreted. Functionally, may be signaling molecules that resemble neuropeptides. Ligand for alpha-neurexins. The chain is Neurexophilin-1 (Nxph1) from Mus musculus (Mouse).